Consider the following 346-residue polypeptide: Biotin synthase (346 aa).

The 219-residue stretch at Arg-38–Thr-256 folds into the Radical SAM core domain. Positions 53, 57, and 60 each coordinate [4Fe-4S] cluster. [2Fe-2S] cluster is bound by residues Cys-97, Cys-128, Cys-188, and Arg-260.

Belongs to the radical SAM superfamily. Biotin synthase family. In terms of assembly, homodimer. The cofactor is [4Fe-4S] cluster. Requires [2Fe-2S] cluster as cofactor.

The enzyme catalyses (4R,5S)-dethiobiotin + (sulfur carrier)-SH + 2 reduced [2Fe-2S]-[ferredoxin] + 2 S-adenosyl-L-methionine = (sulfur carrier)-H + biotin + 2 5'-deoxyadenosine + 2 L-methionine + 2 oxidized [2Fe-2S]-[ferredoxin]. It participates in cofactor biosynthesis; biotin biosynthesis; biotin from 7,8-diaminononanoate: step 2/2. Its function is as follows. Catalyzes the conversion of dethiobiotin (DTB) to biotin by the insertion of a sulfur atom into dethiobiotin via a radical-based mechanism. This chain is Biotin synthase, found in Escherichia coli (strain K12 / DH10B).